The sequence spans 162 residues: Proepiregulin (162 aa).

An N-terminal signal peptide occupies residues 1–22 (METFPAAWVLALLCLGSHLLQA). Positions 23–55 (VISTTVIPSCIPEESEDNCTALVQMEDDPRVAQ) are excised as a propeptide. N-linked (GlcNAc...) asparagine glycosylation is present at N40. An EGF-like domain is found at 57–97 (LITKCSSDMDGYCLHGHCIYLVDMSEKYCRCEVGYTGLRCE). Intrachain disulfides connect C61-C74, C69-C85, and C87-C96. A propeptide spans 102–162 (TVHQPLSREY…TSGGPGLPQV (61 aa)) (removed in mature form). A helical transmembrane segment spans residues 113–133 (ALTVILVFLFLIVTAGSMYYF).

In terms of assembly, interacts with EGFR and ERBB4.

The protein localises to the secreted. Its subcellular location is the extracellular space. The protein resides in the cell membrane. Its function is as follows. Ligand of the EGF receptor/EGFR and ERBB4. Stimulates EGFR and ERBB4 tyrosine phosphorylation. Contributes to inflammation, wound healing, tissue repair, and oocyte maturation by regulating angiogenesis and vascular remodeling and by stimulating cell proliferation. The polypeptide is Proepiregulin (Ereg) (Rattus norvegicus (Rat)).